A 239-amino-acid chain; its full sequence is 1-(5-phosphoribosyl)-5-[(5-phosphoribosylamino)methylideneamino] imidazole-4-carboxamide isomerase (239 aa).

D12 serves as the catalytic Proton acceptor. D133 functions as the Proton donor in the catalytic mechanism.

It belongs to the HisA/HisF family.

The protein resides in the cytoplasm. It catalyses the reaction 1-(5-phospho-beta-D-ribosyl)-5-[(5-phospho-beta-D-ribosylamino)methylideneamino]imidazole-4-carboxamide = 5-[(5-phospho-1-deoxy-D-ribulos-1-ylimino)methylamino]-1-(5-phospho-beta-D-ribosyl)imidazole-4-carboxamide. It participates in amino-acid biosynthesis; L-histidine biosynthesis; L-histidine from 5-phospho-alpha-D-ribose 1-diphosphate: step 4/9. The sequence is that of 1-(5-phosphoribosyl)-5-[(5-phosphoribosylamino)methylideneamino] imidazole-4-carboxamide isomerase from Sulfurihydrogenibium sp. (strain YO3AOP1).